Reading from the N-terminus, the 166-residue chain is Kelch repeat protein B10 (166 aa).

Kelch repeat units lie at residues 25 to 76 and 77 to 129; these read TIFV…STFG and MLYF…KLNN.

The protein belongs to the poxviruses Kelch family.

This chain is Kelch repeat protein B10, found in Oryctolagus cuniculus (Rabbit).